The sequence spans 98 residues: Small ribosomal subunit protein bS6 (98 aa).

It belongs to the bacterial ribosomal protein bS6 family.

Binds together with bS18 to 16S ribosomal RNA. This Lactobacillus acidophilus (strain ATCC 700396 / NCK56 / N2 / NCFM) protein is Small ribosomal subunit protein bS6.